Here is a 757-residue protein sequence, read N- to C-terminus: Filensin (757 aa).

Residues 1 to 39 (MYRRSYVFQTRKEQYERAEEAPRAAEPDRLAEARAAAPN) form a head region. Phosphoserine is present on Ser-5. Positions 39–319 (NLAALQGLGE…RIIENEGNRL (281 aa)) constitute an IF rod domain. The interval 40-74 (LAALQGLGERVAAHVQRARALEQRHAVLRRQLDAF) is coil 1A. The residue at position 41 (Ala-41) is an N-acetylalanine. The interval 75–83 (QRLDELAGP) is linker 1. The interval 84-183 (EDALARHVEG…RYKKNLLEIQ (100 aa)) is coil 1B. The segment at 184–200 (TYVTILQQIIQTTPQAA) is linker 12. The segment at 201 to 319 (AITSGMREEK…RIIENEGNRL (119 aa)) is coil 2. Residues 320–756 (SSAFIETPIT…KKLGEKGSSS (437 aa)) are tail. Ser-340 and Ser-419 each carry phosphoserine. Disordered stretches follow at residues 406 to 436 (EGES…GGKI) and 493 to 705 (GVVV…PPRK). The N-myristoyl glycine moiety is linked to residue Gly-433. The span at 493–512 (GVVVSKGDDSVPPDSGVEPS) shows a compositional bias: low complexity. Ser-512 bears the Phosphoserine mark. A compositionally biased stretch (basic and acidic residues) spans 528–658 (QEKEDGLKEE…KQDDQKEEGA (131 aa)). Repeat unit 1 spans residues 532–545 (DGLKEEGGPPEGKG). A 7 X 14 AA tandem repeats region spans residues 532-622 (DGLKEEGGPP…EEEGPLQKKE (91 aa)). A 2; truncated repeat occupies 546 to 552 (EPPEGKG). 5 tandem repeats follow at residues 553–566 (DSVK…EGKG), 567–580 (DGVK…EGKG), 581–594 (DGVK…EGKG), 595–608 (DGVK…EGKG), and 609–622 (EGLK…QKKE). Thr-628 and Thr-674 each carry phosphothreonine. Phosphoserine occurs at positions 701, 754, and 755.

It belongs to the intermediate filament family. In terms of assembly, part of a complex required for lens intermediate filament formation composed of BFSP1, BFSP2 and CRYAA. Identified in a complex that contains VIM, EZR, AHNAK, BFSP1, BFSP2, ANK2, PLEC, PRX and spectrin. Found in a complex composed of PPL (via C-terminal linker domain), BFSP1 and BFSP2 in the retinal lens. Within the complex interacts with BFSP2. Interacts (via C-terminus) with MIP (via C-terminus) in aged lens fiber cells. Proteolytically cleaved during lens cell fiber differentiation with increased fragmentation as fiber cell age increases. In terms of processing, myristoylated at Gly-433 following proteolytic cleavage at Asp-432. Post-translationally, acetylated at Ala-41 following proteolytic cleavage at Leu-40. Abundantly expressed in both the inner and outer cortex of the retina, expressed at a lower level in the nucleus of the retina (at protein level). Detected in eye lens fiber cells (at protein level).

It localises to the cell membrane. The protein resides in the cytoplasm. Its subcellular location is the cytoskeleton. The protein localises to the cell cortex. Its function is as follows. Required for the correct formation of lens intermediate filaments as part of a complex composed of BFSP1, BFSP2 and CRYAA. Involved in altering the calcium regulation of MIP water permeability. The polypeptide is Filensin (BFSP1) (Bos taurus (Bovine)).